Consider the following 1282-residue polypeptide: MVAQEQLVLLLMLLAGCRGGANAILDPGWVIPSKVEQLIGGDFNLSCTLNEDYFNGKSAEDCPVEKLYFTGGGRVYRDSKHIRILNNTTILFSDTNAVEQENDYHCMCDEYVINKSKVYVGTRPLLVRDFNCLDYDFQFMVCNFTQPPNTVITKYNISYNTNNDWRYSNTLDCNFDSAPVVTCNLTDDNYKRFSETFYFRLSISNALGHETQPITINHFERLVPARPGQNLTLLNRTESSVCLSWEMPRRSNYNRGLVWQVRVTPQNFEPITRPSWRNHTLTIKDTLCLTELPFAGYNYTLRVRVRANQNNTLWSEPMIYAFATAPAPPRRPPRVTYGSFYVYSSEKAMRFYWEPLEEHELNGPDFRYSISEYRINGTAVDPGLIKVESNSAMIDHWSMSAVHHFLIRSSNSQGLSVNATPMTIGPISNRDFKVREPRNIRSVYHPTNKSYTLSWDPPSDQRELQNYTVFWCVPKPGLQSECEGSIRFAEVASGLHHFTTSPDQLLTLHMAVSANYQSHNTGLHWAICSSDKKDDLAKMEPSIDVATSTSLTVSWSERVCAVILAGYNLTYCQRSAGRPDNCTTVTIDRYTNKHVIQNLVPYTDYSVKMLMYSDSRVSKYSDELVNRTGEAAPSQPRELQLIRVTSDSVELAWKPPLLANGVVRAYEGTFRSLHDNVTDTFRVSASADELVNNEKPITYRLGNLTAFTKYEISVRARTVYPSEPSNVILFSTAIGVPSPPQLYVINNPDQSSRLDWEPPRTPAGRIDFYEISLRDNNASCLTSTILPGRNLSYVMATPRCTSHNPFQLAVRAINVEQHPQLNGADAAEGAVLLMSTNGKGCEARTDALGEEERLQFEAYAANMTAYRLYRSDWGIYGFICTPDTHSVKAMYQTIEVTVAILVLGVIFYLVYKKYRKMSDIGLVLPQGIMETMKKPIDMGGLGLGLGPDSSVSGGIVCTRVDDSPPYTPQDLPHDFSSCGSESSKLLLRTASSSGGGGCVDRDGYDDNHETGPISAVGPPTSYLAMRHGLLVQNDRERERERDREQEREREQQQQQRESEMDREQSCTNGYIKPTQMKSWGGNGPSDNDHTFSVPSTAMTAPMSQPLSQIPLSGYVPVPIPQSRFNPAPVQPFGSPAVPSAATAAAASTFFPPAHLLNMDNYVQASDLHKLKPLVAAPLSQTGGPAFAGSSPATSPPLQLPPVHAASPAAATPKMADIGYTTMEQLQLTGLIKPPLAATVGSPTHAAGGAPGGGNQHSRLQPQINGYVTPQDLNAMAHNRHVL.

The signal sequence occupies residues 1–23 (MVAQEQLVLLLMLLAGCRGGANA). Residues 24–889 (ILDPGWVIPS…CTPDTHSVKA (866 aa)) lie on the Extracellular side of the membrane. Residues asparagine 44, asparagine 86, asparagine 87, and asparagine 114 are each glycosylated (N-linked (GlcNAc...) asparagine). The cysteines at positions 47 and 106 are disulfide-linked. Fibronectin type-III domains follow at residues 124-220 (PLLV…NHFE), 227-327 (PGQN…TAPA), 329-431 (PRRP…SNRD), 436-535 (EPRN…KKDD), 537-631 (AKME…TGEA), 635-735 (QPRE…TAIG), and 736-836 (VPSP…LMST). Cysteine 132 and cysteine 142 are joined by a disulfide. Asparagine 143 and asparagine 156 each carry an N-linked (GlcNAc...) asparagine glycan. A disulfide bond links cysteine 173 and cysteine 183. N-linked (GlcNAc...) asparagine glycosylation is found at asparagine 184, asparagine 230, asparagine 235, asparagine 278, asparagine 298, asparagine 310, asparagine 376, asparagine 448, and asparagine 466. A disulfide bond links cysteine 472 and cysteine 482. N-linked (GlcNAc...) asparagine glycans are attached at residues asparagine 568, asparagine 581, asparagine 626, asparagine 676, asparagine 703, asparagine 777, asparagine 790, and asparagine 862. Residues 890-910 (MYQTIEVTVAILVLGVIFYLV) form a helical membrane-spanning segment. The Cytoplasmic portion of the chain corresponds to 911–1282 (YKKYRKMSDI…NAMAHNRHVL (372 aa)). Serine 976 is modified (phosphoserine). Disordered stretches follow at residues 989–1092 (TASS…HTFS) and 1238–1258 (TVGSPTHAAGGAPGGGNQHSR). Basic and acidic residues-rich tracts occupy residues 999-1009 (VDRDGYDDNHE) and 1033-1064 (NDRERERERDREQEREREQQQQQRESEMDREQ).

This sequence belongs to the type I cytokine receptor family. As to quaternary structure, interacts with wdp; the interaction promotes internalization of dome and its subsequent lysosomal degradation; thereby reducing JAK/STAT signaling. In terms of processing, undergoes lysosomal degradation. As to expression, in stage 11 embryos, tracheal pits show highest expression, at stage 14 high expression is detected in the posterior spiracles, gut and head.

It is found in the apicolateral cell membrane. Its function is as follows. Critical for epithelial morphogenesis during oogenesis; border cell migration. Required in the germarium for the polarization of follicle cells during encapsulation of germline cells. Required for embryonic segmentation and trachea specification. Essential receptor molecule for upd and JAK/STAT signaling during oogenesis. The sequence is that of Cytokine receptor (dome) from Drosophila melanogaster (Fruit fly).